Consider the following 330-residue polypeptide: Phosphate acyltransferase (330 aa).

The protein belongs to the PlsX family. In terms of assembly, homodimer. Probably interacts with PlsY.

It is found in the cytoplasm. The enzyme catalyses a fatty acyl-[ACP] + phosphate = an acyl phosphate + holo-[ACP]. The protein operates within lipid metabolism; phospholipid metabolism. Its function is as follows. Catalyzes the reversible formation of acyl-phosphate (acyl-PO(4)) from acyl-[acyl-carrier-protein] (acyl-ACP). This enzyme utilizes acyl-ACP as fatty acyl donor, but not acyl-CoA. In Streptococcus pneumoniae serotype 2 (strain D39 / NCTC 7466), this protein is Phosphate acyltransferase.